Here is a 114-residue protein sequence, read N- to C-terminus: Ribosome-binding factor A (114 aa).

It belongs to the RbfA family. In terms of assembly, monomer. Binds 30S ribosomal subunits, but not 50S ribosomal subunits or 70S ribosomes.

It is found in the cytoplasm. Functionally, one of several proteins that assist in the late maturation steps of the functional core of the 30S ribosomal subunit. Associates with free 30S ribosomal subunits (but not with 30S subunits that are part of 70S ribosomes or polysomes). Required for efficient processing of 16S rRNA. May interact with the 5'-terminal helix region of 16S rRNA. The polypeptide is Ribosome-binding factor A (Macrococcus caseolyticus (strain JCSC5402) (Macrococcoides caseolyticum)).